Reading from the N-terminus, the 912-residue chain is MVDYHAANQAYQYGPNSGGGNGAGGGGSMGDYMAQEDDWDRDLLLDPAWEKQQRKTFTAWCNSHLRKAGTQIENIDEDFRDGLKLMLLLEVISGERLPKPERGKMRVHKINNVNKALDFIASKGVKLVSIGAEEIVDGNAKMTLGMIWTIILRFAIQDISVEETSAKEGLLLWCQRKTAPYKNVNVQNFHISWKDGLAFNALIHRHRPELIEYDKLRKDDPVTNLNNAFEVAEKYLDIPKMLDAEDIVNTARPDEKAIMTYVSSFYHAFSGAQKAETAANRICKVLAVNQENEHLMEDYERLASDLLEWIRRTIPWLEDRVPQKTIQEMQQKLEDFRDYRRVHKPPKVQEKCQLEINFNTLQTKLRLSNRPAFMPSEGRMVSDINNGWQHLEQAEKGYEEWLLNEIRRLERLDHLAEKFRQKASIHEAWTDGKEAMLKQRDYETATLSDIKALIRKHEAFESDLAAHQDRVEQIAAIAQELNELDYYDSHNVNTRCQKICDQWDNLGSLTHSRREALEKTEKQLETIDQLHLEYAKRAAPFNNWMESAMEDLQDMFIVHTIEEIEGLISAHDQFKSTLPDADREREAILAIHKEAQRIAESNHIKLSGSNPYTTVTPQIINSKWEKVQQLVPKRDHALLEEQSKQQSNEHLRRQFASQANMVGPWIQTKMEEIGRISIEMNGTLEDQLSHLKQYERSIVDYKPSLDLLEQQHQLIQEALIFDNKHTNYTMEHIRVGWEQLLTTIARTINEVENQILTRDAKGISQEQMQEFRASFNHFDKDHGGALGPEEFKACLISLGYDVENDRQGDAEFNRIMSVVDPNHSGLVTFQAFIDFMSRETTDTDTADQVIASFKVLAGDKNFITAEELRRELPPDQAEYCIARMAPYQGPDAAPGALDYKSFSTALYGESDL.

The tract at residues 1-267 (MVDYHAANQA…IMTYVSSFYH (267 aa)) is actin-binding. An interaction with VCL region spans residues 12 to 27 (QYGPNSGGGNGAGGGG). The tract at residues 12–31 (QYGPNSGGGNGAGGGGSMGD) is disordered. Gly residues predominate over residues 16-29 (NSGGGNGAGGGGSM). Tyrosine 32 is subject to Phosphotyrosine. Residues 41 to 62 (RDLLLDPAWEKQQRKTFTAWCN) form an interaction with VCL region. Calponin-homology (CH) domains follow at residues 51–155 (KQQR…LRFA) and 164–270 (TSAK…HAFS). The short motif at 85–89 (LMLLL) is the LXXLL motif element. The interaction with VCL stretch occupies residues 109–127 (KINNVNKALDFIASKGVKL). Lysine 115 bears the N6-acetyllysine mark. Residues 178–193 (TAPYKNVNVQNFHISW) are polyphosphoinositide (PIP2)-binding. Lysine 215 is subject to N6-acetyllysine. At threonine 250 the chain carries Phosphothreonine. Spectrin repeat units lie at residues 294 to 404 (HLME…WLLN), 414 to 519 (HLAE…ALEK), 529 to 640 (QLHL…ALLE), and 650 to 753 (HLRR…EVEN). Residues lysine 593 and lysine 626 each carry the N6-acetyllysine modification. Serine 697 carries the phosphoserine modification. Positions 737 to 912 (WEQLLTTIAR…STALYGESDL (176 aa)) are mediates interaction with MICALL2. EF-hand domains are found at residues 766–801 (EQMQ…LGYD) and 807–842 (QGDA…ETTD). Aspartate 779 is a binding site for Ca(2+). Residue lysine 780 is modified to N6-acetyllysine. Residues aspartate 781 and glutamate 790 each contribute to the Ca(2+) site. Lysine 860 is subject to N6-acetyllysine. Position 910 is a phosphoserine (serine 910).

This sequence belongs to the alpha-actinin family. Homodimer; antiparallel. Interacts with MAGI1. Interacts with PDLIM2. Identified in a complex with CASK, IQGAP1, MAGI2, NPHS1, SPTAN1 and SPTBN1. Identified in a IGF2BP1-dependent mRNP granule complex containing untranslated mRNAs. Component of the CART complex, at least composed of ACTN4, HGS/HRS, MYO5B and TRIM3. Binds TRIM3 at the N-terminus. Interacts with MICALL2 (preferentially in opened conformation); stimulated by RAB13 activation. Interacts with PPARG and RARA. Binds to VCL; this interaction triggers VCL conformational changes. Interacts with SEPTIN14. Interacts with IGSF8.

It is found in the nucleus. Its subcellular location is the cytoplasm. It localises to the cell junction. The protein resides in the cytoskeleton. The protein localises to the stress fiber. It is found in the perinuclear region. Functionally, F-actin cross-linking protein which is thought to anchor actin to a variety of intracellular structures. This is a bundling protein. Probably involved in vesicular trafficking via its association with the CART complex. The CART complex is necessary for efficient transferrin receptor recycling but not for EGFR degradation. Involved in tight junction assembly in epithelial cells probably through interaction with MICALL2. Links MICALL2 to the actin cytoskeleton and recruits it to the tight junctions. May also function as a transcriptional coactivator, stimulating transcription mediated by the nuclear hormone receptors PPARG and RARA. Association with IGSF8 regulates the immune synapse formation and is required for efficient T-cell activation. This chain is Alpha-actinin-4, found in Mus musculus (Mouse).